The chain runs to 262 residues: Hydroxyethylthiazole kinase (262 aa).

Met50 is a substrate binding site. ATP contacts are provided by Arg125 and Thr171. Position 198 (Gly198) interacts with substrate.

This sequence belongs to the Thz kinase family. Mg(2+) serves as cofactor.

The enzyme catalyses 5-(2-hydroxyethyl)-4-methylthiazole + ATP = 4-methyl-5-(2-phosphooxyethyl)-thiazole + ADP + H(+). The protein operates within cofactor biosynthesis; thiamine diphosphate biosynthesis; 4-methyl-5-(2-phosphoethyl)-thiazole from 5-(2-hydroxyethyl)-4-methylthiazole: step 1/1. In terms of biological role, catalyzes the phosphorylation of the hydroxyl group of 4-methyl-5-beta-hydroxyethylthiazole (THZ). In Escherichia coli O157:H7, this protein is Hydroxyethylthiazole kinase.